The sequence spans 274 residues: NH(3)-dependent NAD(+) synthetase (274 aa).

Residue 46 to 53 (GISGGQDS) participates in ATP binding. Aspartate 52 is a binding site for Mg(2+). Arginine 140 contacts deamido-NAD(+). An ATP-binding site is contributed by threonine 160. Glutamate 165 contacts Mg(2+). Deamido-NAD(+) is bound by residues lysine 173 and aspartate 180. Positions 189 and 211 each coordinate ATP. 260–261 (HK) serves as a coordination point for deamido-NAD(+).

The protein belongs to the NAD synthetase family. As to quaternary structure, homodimer.

The catalysed reaction is deamido-NAD(+) + NH4(+) + ATP = AMP + diphosphate + NAD(+) + H(+). Its pathway is cofactor biosynthesis; NAD(+) biosynthesis; NAD(+) from deamido-NAD(+) (ammonia route): step 1/1. In terms of biological role, catalyzes the ATP-dependent amidation of deamido-NAD to form NAD. Uses ammonia as a nitrogen source. The protein is NH(3)-dependent NAD(+) synthetase of Sodalis glossinidius (strain morsitans).